A 509-amino-acid polypeptide reads, in one-letter code: Protein disulfide-isomerase (509 aa).

An N-terminal signal peptide occupies residues 1-19; the sequence is MLSRSLLCLALAWVARVGA. The region spanning 20–136 is the Thioredoxin 1 domain; that stretch reads DAPEEEDNVL…IVNWLKKRTG (117 aa). Residues Cys55 and Cys58 each act as nucleophile in the active site. A disulfide bridge connects residues Cys55 and Cys58. N6-acetyllysine is present on Lys202. Lys224 and Lys273 each carry N6-succinyllysine. Phosphoserine occurs at positions 333 and 359. Residues 335-477 enclose the Thioredoxin 2 domain; that stretch reads ELTAEKITEF…FKKFLESGGQ (143 aa). Residues Cys399 and Cys402 each act as nucleophile in the active site. A disulfide bond links Cys399 and Cys402. At Ser429 the chain carries Phosphoserine. A disordered region spans residues 473 to 509; that stretch reads ESGGQDGAGDDDDVDLEEALEPDMEEDDDQKAVKDEL. Acidic residues predominate over residues 480-501; sequence AGDDDDVDLEEALEPDMEEDDD. The short motif at 506–509 is the Prevents secretion from ER element; the sequence is KDEL.

It belongs to the protein disulfide isomerase family. In terms of assembly, heterodimer; heterodimerizes with the protein microsomal triglyceride transfer MTTP. Homodimer. Homodimer. Monomers and homotetramers may also occur. Interacts with P4HA2, forming a heterotetramer consisting of 2 alpha subunits (P4HA2) and 2 beta (P4HB), where P4HB plays the role of a structural subunit; this tetramer catalyzes the formation of 4-hydroxyproline in collagen. Also constitutes the structural subunit of the microsomal triacylglycerol transfer protein MTTP in mammalian cells. Stabilizes both enzymes and retain them in the ER without contributing to the catalytic activity. Binds UBQLN1. Interacts with ERO1B. Interacts with ILDR2. Interacts with ERN1/IRE1A (via N-terminus); the interaction is enhanced by phosphorylation of P4HB by FAM20C in response to endoplasmic reticulum stress and results in attenuation of ERN1 activity. In terms of processing, phosphorylation of Ser-359 by FAM20C is induced by endoplasmic reticulum stress and results in a functional switch from oxidoreductase to molecular chaperone. It also promotes interaction with ERN1.

The protein localises to the endoplasmic reticulum. Its subcellular location is the endoplasmic reticulum lumen. The protein resides in the melanosome. It localises to the cell membrane. It carries out the reaction Catalyzes the rearrangement of -S-S- bonds in proteins.. Its function is as follows. This multifunctional protein catalyzes the formation, breakage and rearrangement of disulfide bonds. At the cell surface, seems to act as a reductase that cleaves disulfide bonds of proteins attached to the cell. May therefore cause structural modifications of exofacial proteins. Inside the cell, seems to form/rearrange disulfide bonds of nascent proteins. At high concentrations and following phosphorylation by FAM20C, functions as a chaperone that inhibits aggregation of misfolded proteins. At low concentrations, facilitates aggregation (anti-chaperone activity). May be involved with other chaperones in the structural modification of the TG precursor in hormone biogenesis. Also acts as a structural subunit of various enzymes such as prolyl 4-hydroxylase and microsomal triacylglycerol transfer protein MTTP. Receptor for LGALS9; the interaction retains P4HB at the cell surface of Th2 T helper cells, increasing disulfide reductase activity at the plasma membrane, altering the plasma membrane redox state and enhancing cell migration. The chain is Protein disulfide-isomerase (P4HB) from Cricetulus griseus (Chinese hamster).